Here is a 475-residue protein sequence, read N- to C-terminus: Bifunctional protein HldE (475 aa).

The segment at 1–318 (MMQYSPKFNN…ENAIHHREET (318 aa)) is ribokinase. Residue 195–198 (NMSE) coordinates ATP. Residue aspartate 264 is part of the active site. The cytidylyltransferase stretch occupies residues 344-475 (MTNGCFDILH…NVIKKIQASK (132 aa)).

This sequence in the N-terminal section; belongs to the carbohydrate kinase PfkB family. In the C-terminal section; belongs to the cytidylyltransferase family. As to quaternary structure, homodimer.

The enzyme catalyses D-glycero-beta-D-manno-heptose 7-phosphate + ATP = D-glycero-beta-D-manno-heptose 1,7-bisphosphate + ADP + H(+). It catalyses the reaction D-glycero-beta-D-manno-heptose 1-phosphate + ATP + H(+) = ADP-D-glycero-beta-D-manno-heptose + diphosphate. It participates in nucleotide-sugar biosynthesis; ADP-L-glycero-beta-D-manno-heptose biosynthesis; ADP-L-glycero-beta-D-manno-heptose from D-glycero-beta-D-manno-heptose 7-phosphate: step 1/4. Its pathway is nucleotide-sugar biosynthesis; ADP-L-glycero-beta-D-manno-heptose biosynthesis; ADP-L-glycero-beta-D-manno-heptose from D-glycero-beta-D-manno-heptose 7-phosphate: step 3/4. Functionally, catalyzes the phosphorylation of D-glycero-D-manno-heptose 7-phosphate at the C-1 position to selectively form D-glycero-beta-D-manno-heptose-1,7-bisphosphate. In terms of biological role, catalyzes the ADP transfer from ATP to D-glycero-beta-D-manno-heptose 1-phosphate, yielding ADP-D-glycero-beta-D-manno-heptose. The polypeptide is Bifunctional protein HldE (Actinobacillus pleuropneumoniae serotype 5b (strain L20)).